A 128-amino-acid polypeptide reads, in one-letter code: Small ribosomal subunit protein bS6 (128 aa).

A disordered region spans residues 100–128 (SPMAKAKEERFTRRDDERREEATEAASEE). The segment covering 104–121 (KAKEERFTRRDDERREEA) has biased composition (basic and acidic residues).

Belongs to the bacterial ribosomal protein bS6 family.

Binds together with bS18 to 16S ribosomal RNA. This chain is Small ribosomal subunit protein bS6, found in Aeromonas hydrophila subsp. hydrophila (strain ATCC 7966 / DSM 30187 / BCRC 13018 / CCUG 14551 / JCM 1027 / KCTC 2358 / NCIMB 9240 / NCTC 8049).